The primary structure comprises 89 residues: Large ribosomal subunit protein uL23c (89 aa).

Belongs to the universal ribosomal protein uL23 family. As to quaternary structure, part of the 50S ribosomal subunit.

It localises to the plastid. The protein resides in the chloroplast. Functionally, binds to 23S rRNA. This chain is Large ribosomal subunit protein uL23c (rpl23), found in Staurastrum punctulatum (Green alga).